Consider the following 272-residue polypeptide: Short-chain dehydrogenase reductase ATA1 (272 aa).

14 to 38 is a binding site for NADP(+); that stretch reads IITGGARGIGAATARLFTENGAYVI. Residue Ser143 coordinates substrate. Residue Tyr156 is the Proton acceptor of the active site. Lys160 contributes to the NADP(+) binding site.

The protein belongs to the short-chain dehydrogenases/reductases (SDR) family. As to expression, expressed specifically in tapetal cells.

In terms of biological role, may play a role in tapetum development. The polypeptide is Short-chain dehydrogenase reductase ATA1 (Arabidopsis thaliana (Mouse-ear cress)).